We begin with the raw amino-acid sequence, 300 residues long: Probable endonuclease 4 (300 aa).

Zn(2+) contacts are provided by His69, His110, Glu145, Asp179, His182, His214, Asp227, His229, and Glu259.

Belongs to the AP endonuclease 2 family. Zn(2+) is required as a cofactor.

It carries out the reaction Endonucleolytic cleavage to 5'-phosphooligonucleotide end-products.. Endonuclease IV plays a role in DNA repair. It cleaves phosphodiester bonds at apurinic or apyrimidinic (AP) sites, generating a 3'-hydroxyl group and a 5'-terminal sugar phosphate. This chain is Probable endonuclease 4, found in Lachnoclostridium phytofermentans (strain ATCC 700394 / DSM 18823 / ISDg) (Clostridium phytofermentans).